We begin with the raw amino-acid sequence, 378 residues long: Anhydro-N-acetylmuramic acid kinase (378 aa).

22–29 is an ATP binding site; the sequence is GTSLDGAD.

This sequence belongs to the anhydro-N-acetylmuramic acid kinase family.

The catalysed reaction is 1,6-anhydro-N-acetyl-beta-muramate + ATP + H2O = N-acetyl-D-muramate 6-phosphate + ADP + H(+). It functions in the pathway amino-sugar metabolism; 1,6-anhydro-N-acetylmuramate degradation. It participates in cell wall biogenesis; peptidoglycan recycling. Catalyzes the specific phosphorylation of 1,6-anhydro-N-acetylmuramic acid (anhMurNAc) with the simultaneous cleavage of the 1,6-anhydro ring, generating MurNAc-6-P. Is required for the utilization of anhMurNAc either imported from the medium or derived from its own cell wall murein, and thus plays a role in cell wall recycling. In Bordetella petrii (strain ATCC BAA-461 / DSM 12804 / CCUG 43448), this protein is Anhydro-N-acetylmuramic acid kinase.